Reading from the N-terminus, the 293-residue chain is MATSTSSSLSLSFFSSSLFSSKSRNFSSKPILKLPSSSHSQTSLSLSIKSELIPLPILNFSGEKVGETFLNLKTAPPEKARAVVHRGLITHLQNKRRGTASTLTRAEVRGGGRKPYPQKKTGRARRGSQGSPLRPGGGVIFGPKPRDWTIKMNKKERRLALSTAIASAVGNSFVVEEFAENFEKPKTKDFIAAMQRWGLDPAEKSLFFLMDLVENVEKSGRNIRTLKLLTPRSLNLFDVLNAEKLVFTEGTIQYLNQRYGVDTLEDEDEEEEEEEEGEEVDDGVEDGTPEPAE.

The N-terminal 50 residues, methionine 1 to serine 50, are a transit peptide targeting the chloroplast. 2 disordered regions span residues glutamate 107 to glycine 138 and tyrosine 259 to glutamate 293. Residues tyrosine 116–arginine 126 show a composition bias toward basic residues. Over residues threonine 263–glutamate 293 the composition is skewed to acidic residues.

Belongs to the universal ribosomal protein uL4 family. As to quaternary structure, component of the chloroplast large ribosomal subunit (LSU). Mature 70S chloroplast ribosomes of higher plants consist of a small (30S) and a large (50S) subunit. The 30S small subunit contains 1 molecule of ribosomal RNA (16S rRNA) and 24 different proteins. The 50S large subunit contains 3 rRNA molecules (23S, 5S and 4.5S rRNA) and 33 different proteins. Highly expressed in cotyledon and weakly in roots.

It is found in the plastid. The protein localises to the chloroplast. Its function is as follows. Component of the chloroplast ribosome (chloro-ribosome), a dedicated translation machinery responsible for the synthesis of chloroplast genome-encoded proteins, including proteins of the transcription and translation machinery and components of the photosynthetic apparatus. In Spinacia oleracea (Spinach), this protein is Large ribosomal subunit protein uL4c (RPL4).